A 146-amino-acid polypeptide reads, in one-letter code: Hemoglobin subunit beta (146 aa).

The Globin domain occupies 2 to 146 (EWTDFERATI…VVNSLGRQYH (145 aa)). Heme b contacts are provided by H63 and H92.

Belongs to the globin family. In terms of assembly, heterotetramer of two alpha chains and two beta chains. Can form polymers. Red blood cells.

In terms of biological role, involved in oxygen transport from gills to the various peripheral tissues. The polypeptide is Hemoglobin subunit beta (hbb) (Chelidonichthys kumu (Bluefin gurnard)).